The primary structure comprises 180 residues: Translation initiation factor IF-3 (180 aa).

This sequence belongs to the IF-3 family. In terms of assembly, monomer.

It is found in the cytoplasm. IF-3 binds to the 30S ribosomal subunit and shifts the equilibrium between 70S ribosomes and their 50S and 30S subunits in favor of the free subunits, thus enhancing the availability of 30S subunits on which protein synthesis initiation begins. This chain is Translation initiation factor IF-3, found in Xylella fastidiosa (strain Temecula1 / ATCC 700964).